An 827-amino-acid polypeptide reads, in one-letter code: Glycerol-3-phosphate acyltransferase (827 aa).

The short motif at 325–330 (CHRSHM) is the HXXXXD motif element.

It belongs to the GPAT/DAPAT family.

Its subcellular location is the cell inner membrane. It catalyses the reaction sn-glycerol 3-phosphate + an acyl-CoA = a 1-acyl-sn-glycero-3-phosphate + CoA. It participates in phospholipid metabolism; CDP-diacylglycerol biosynthesis; CDP-diacylglycerol from sn-glycerol 3-phosphate: step 1/3. This chain is Glycerol-3-phosphate acyltransferase, found in Shigella flexneri serotype 5b (strain 8401).